Reading from the N-terminus, the 291-residue chain is Segregation and condensation protein B (291 aa).

It belongs to the ScpB family. As to quaternary structure, homodimer. Homodimerization may be required to stabilize the binding of ScpA to the Smc head domains. Component of a cohesin-like complex composed of ScpA, ScpB and the Smc homodimer, in which ScpA and ScpB bind to the head domain of Smc. The presence of the three proteins is required for the association of the complex with DNA.

It localises to the cytoplasm. Its function is as follows. Participates in chromosomal partition during cell division. May act via the formation of a condensin-like complex containing Smc and ScpA that pull DNA away from mid-cell into both cell halves. The chain is Segregation and condensation protein B from Mycoplasmoides gallisepticum (strain R(low / passage 15 / clone 2)) (Mycoplasma gallisepticum).